A 474-amino-acid polypeptide reads, in one-letter code: MWTVQNRESLGLLSFPVMIAMVCCAHSANEPSNMSYVKETVDRLLKGYDIRLRPDFGGPPVDVGMRIDVASIDMVSEVNMDYTLTMYFQQSWKDKRLSYSGIPLNLTLDNRVADQLWVPDTYFLNDKKSFVHGVTVKNRMIRLHPDGTVLYGLRITTTAACMMDLRRYPLDEQNCTLEIESYGYTTDDIEFYWNGGEGAVTGVNKIELPQFSIVDYKMVSKKVEFTTGAYPRLSLSFRLKRNIGYFILQTYMPSTLITILSWVSFWINYDASAARVALGITTVLTMTTISTHLRETLPKIPYVKAIDIYLMGCFVFVFLALLEYAFVNYIFFGKGPQKKGAGKQDQSANEKNKLEMNKVQVDAHGNILLSTLEIRNETSGSEVLTGVGDPKTTMYSYDSASIQYRKPMSSREGYGRALDRHGAHSKGRIRRRASQLKVKIPDLTDVNSIDKWSRMFFPITFSLFNVVYWLYYVH.

Positions 1–25 (MWTVQNRESLGLLSFPVMIAMVCCA) are cleaved as a signal peptide. At 26-245 (HSANEPSNMS…SFRLKRNIGY (220 aa)) the chain is on the extracellular side. 2 N-linked (GlcNAc...) asparagine glycosylation sites follow: asparagine 33 and asparagine 105. Tyrosine 122 serves as a coordination point for histamine. The cysteines at positions 161 and 175 are disulfide-linked. Asparagine 174 carries an N-linked (GlcNAc...) asparagine glycan. Histamine-binding positions include 181 to 182 (SY) and threonine 227. The 4-aminobutanoate site is built by tyrosine 182 and threonine 227. Transmembrane regions (helical) follow at residues 246-267 (FILQTYMPSTLITILSWVSFWI), 271-293 (ASAARVALGITTVLTMTTISTHL), and 305-327 (AIDIYLMGCFVFVFLALLEYAFV). Residues 328 to 451 (NYIFFGKGPQ…DLTDVNSIDK (124 aa)) lie on the Cytoplasmic side of the membrane. Residues 452–473 (WSRMFFPITFSLFNVVYWLYYV) form a helical membrane-spanning segment.

Belongs to the ligand-gated ion channel (TC 1.A.9) family. Gamma-aminobutyric acid receptor (TC 1.A.9.5) subfamily. GABRB1 sub-subfamily. As to quaternary structure, heteropentamer, formed by a combination of alpha (GABRA1-6), beta (GABRB1-3), gamma (GABRG1-3), delta (GABRD), epsilon (GABRE), rho (GABRR1-3), pi (GABRP) and theta (GABRQ) chains, each subunit exhibiting distinct physiological and pharmacological properties. Binds UBQLN1.

The protein resides in the postsynaptic cell membrane. The protein localises to the cell membrane. It catalyses the reaction chloride(in) = chloride(out). With respect to regulation, potentiated by histamine. Its function is as follows. Beta subunit of the heteropentameric ligand-gated chloride channel gated by gamma-aminobutyric acid (GABA), a major inhibitory neurotransmitter in the brain. GABA-gated chloride channels, also named GABA(A) receptors (GABAAR), consist of five subunits arranged around a central pore and contain GABA active binding site(s) located at the alpha and beta subunit interface(s). When activated by GABA, GABAARs selectively allow the flow of chloride anions across the cell membrane down their electrochemical gradient. Chloride influx into the postsynaptic neuron following GABAAR opening decreases the neuron ability to generate a new action potential, thereby reducing nerve transmission. Beta-containing GABAARs can simultaneously bind GABA and histamine where histamine binds at the interface of two neighboring beta subunits, which may be involved in the regulation of sleep and wakefulness. This is Gamma-aminobutyric acid receptor subunit beta-1 (GABRB1) from Bos taurus (Bovine).